The primary structure comprises 293 residues: HTH-type transcriptional regulator HdfR (293 aa).

One can recognise an HTH lysR-type domain in the interval 1-58 (MDTELLKTFLEVSRTRHFGRAAESLYLTQSAVSFRIRQLENQLGANLFTRHRNNIRLT). The segment at residues 18–37 (FGRAAESLYLTQSAVSFRIR) is a DNA-binding region (H-T-H motif).

Belongs to the LysR transcriptional regulatory family.

Its function is as follows. Negatively regulates the transcription of the flagellar master operon flhDC by binding to the upstream region of the operon. This is HTH-type transcriptional regulator HdfR from Yersinia enterocolitica serotype O:8 / biotype 1B (strain NCTC 13174 / 8081).